The chain runs to 1406 residues: MLMQVEKKKLLSQADIPTKFDPINYLGEYLMRHNTHYIKDPGVSGYQRVMKEITEELKTHVPDTINNRISKMKEKVKEKREQREYISTVKVKVAGMRKQALEEQFNEWVLNPKGMIPIVVYISSYITDLKSEVFEEFLKHLCHSAEEFREIILTDMRRQMFAELFLQCDSGKVMALDRQRTLALLEAFYDQCSSTTRSLLRNPRQWPFVEFEEIELIEFWGDMDIKKHIYEDFDALLLKMNMLVAEKLAGKLAENKDLPQQQRDQELSSDSTTEPETATQLTSQQRSRRVSLTGQGQGKGPRKTSASKQGASRGSVAEQGSRRSSGVNQTQQRGSVAEQGSRRSSAVEQTQQRGSVAEQGSRRSSTVEQTRQRGSVAEQGSRRSSTVEQTQRRGSVAEQGSRRSSGVNQTQQRGSVAEQGSRRSSAVEQTQQRGSVAEQGSRRSSAMEQEPQTAQDPNSDSLPEQESHRGSITEGSHRGSISEPGQRRASVTGQRRKSSVDDSGSAGSRRGSGTDQGQHRGSVGQRKGSGERKMSASEYGPHQESITEEPLTASEPGPQIDTIQELDEDSTPQLEDDSALKESKTSELTKIETQEEKPLLLINEEQVPRDSKQPEVPTSSKKERPSGSPKKGRLSGTSKRDSQKDKACEPKPQHVEGKKWSGEFLICDWKIKHVKSEEEEQAKLICDDTRFTDLHATIRNFQTYKGIKGRSAFNGVSLDLLQFVQLLETFVGEDTSFSLSKDLASFFQKNYSETKQEKIKALEQARQNSSRIRRRILLQAIFEKWDNDGSGFLDLNEVDDLLYTYKEGMERESMKKAKLHINFPEPSPGHEVKLSSKQFQRYIELVVSELRGNEDEVLESVVEFLMGSLERSHVEGLRNCARRKWLHQIQYAAETSGVSLEPVYTETFRVLTQDAEAHGNKKISAHISLLEENVFLPERGHVLLRNVACTLDDAPFVLNKVLYRDMKGISFTVVDEGKPIHVPQVQHHGNIFFWNSFRSKNEYNGSFLALPLQDAYMRIFGVLAVDTLRDPHEINIFLPHEIKFYQGVANAFSTAYHHVHSREHVLHSVMTGIRWLFSVTSGITTITTCFIEPSSEQEDYVLRNMMVTDCLGLAEIHTDPPTITRNACIFRDFLFKCTDTSEVILASSGGETHIAIPLRQRTKEAMGILDVNIGRSRMLLYQEYKDLQKMVKMIQNVSYEILGEFSGEIEKTMVIEMESAGEVKRAGILFFRTMLQELQECLCLLDSMDFVSLLLYEHKYHVDSILQDITLQEVEANVALVHDVLKGVILFSQREKDSLSDLEEWEKWKFHINKYLVEEICVLDPTASNVEVNVELVTSYIQAHSRTEVWNFRNIVIELLYHWINICLTLIELNMRQDVSIIPPLPKKSATSIYAISSERSIREKL.

The interval 255–655 is disordered; it reads NKDLPQQQRD…KACEPKPQHV (401 aa). Composition is skewed to polar residues over residues 258–294, 322–334, 342–354, 362–373, 382–393, 402–414, 422–434, and 442–464; these read LPQQ…SLTG, RRSS…QQRG, RRSSTVEQTRQR, RRSSTVEQTQRR, and RRSS…SLPE. Residues 465 to 477 are compositionally biased toward basic and acidic residues; it reads QESHRGSITEGSH. Residues 501 to 513 are compositionally biased toward low complexity; sequence DDSGSAGSRRGSG. The span at 564–577 shows a compositional bias: acidic residues; it reads QELDEDSTPQLEDD. Composition is skewed to basic and acidic residues over residues 578-598 and 638-655; these read SALK…EEKP and SKRD…PQHV. One can recognise an EF-hand domain in the interval 773-808; the sequence is RRRILLQAIFEKWDNDGSGFLDLNEVDDLLYTYKEG. Asp786, Asp788, Ser790, and Glu797 together coordinate Ca(2+).

The sequence is that of EF-hand calcium-binding domain-containing protein 5 (Efcab5) from Mus musculus (Mouse).